We begin with the raw amino-acid sequence, 791 residues long: KN motif and ankyrin repeat domain-containing protein 3 (791 aa).

5 disordered regions span residues 1-37 (MAKF…SVET), 56-181 (RGPA…GPAQ), 254-312 (ATSD…ETRE), 401-425 (GCTE…GDEM), and 463-514 (YESS…GDCE). The segment covering 25 to 34 (SARSPSSPYS) has biased composition (polar residues). Over residues 105-125 (LSPGAFPGLSLPPLSPRSLSR) the composition is skewed to low complexity. A compositionally biased stretch (basic and acidic residues) spans 127 to 149 (PRVEHTLLETSRRLEQAQARERA). Phosphoserine is present on residues S151, S159, S163, S166, S167, and S176. Over residues 158–180 (RSPRGSGRSSPAPNPALASPGPA) the composition is skewed to low complexity. The stretch at 180–229 (AQLQLVREQMAAALRRLRELEDQARALPELQEQVRALRAEKARLLAGRVQ) forms a coiled coil. Composition is skewed to basic and acidic residues over residues 254–280 (ATSD…RRSE) and 293–312 (PDGE…ETRE). S279 carries the phosphoserine modification. Positions 401-410 (GCTEKTTQTE) are enriched in polar residues. The span at 485–496 (SSSSGSDDSSGG) shows a compositional bias: low complexity. Residues 505 to 514 (HNDKDAGDCE) are compositionally biased toward basic and acidic residues. ANK repeat units follow at residues 606–636 (NGNT…DVNH), 640–677 (AGYS…AKAS), 679–708 (TGQT…DVNV), 712–742 (DGAT…DLTI), and 746–775 (EGTS…SNHQ). The segment covering 772–783 (SNHQGQSSTGSP) has biased composition (polar residues). The disordered stretch occupies residues 772-791 (SNHQGQSSTGSPTAKECNDK).

May be involved in the control of cytoskeleton formation by regulating actin polymerization. This Mus musculus (Mouse) protein is KN motif and ankyrin repeat domain-containing protein 3.